A 439-amino-acid polypeptide reads, in one-letter code: Ribosomal protein uS12 methylthiotransferase RimO (439 aa).

The region spanning 5-115 (PKIGFVSLGC…LIEAVHTHAP (111 aa)) is the MTTase N-terminal domain. Residues Cys14, Cys50, Cys79, Cys146, Cys150, and Cys153 each contribute to the [4Fe-4S] cluster site. A Radical SAM core domain is found at 132 to 369 (LTPRHYSYLK…MGLQAQISTD (238 aa)). In terms of domain architecture, TRAM spans 372-439 (QRFVGTEQQV…ESTEYDLIAD (68 aa)).

It belongs to the methylthiotransferase family. RimO subfamily. It depends on [4Fe-4S] cluster as a cofactor.

The protein localises to the cytoplasm. It catalyses the reaction L-aspartate(89)-[ribosomal protein uS12]-hydrogen + (sulfur carrier)-SH + AH2 + 2 S-adenosyl-L-methionine = 3-methylsulfanyl-L-aspartate(89)-[ribosomal protein uS12]-hydrogen + (sulfur carrier)-H + 5'-deoxyadenosine + L-methionine + A + S-adenosyl-L-homocysteine + 2 H(+). Its function is as follows. Catalyzes the methylthiolation of an aspartic acid residue of ribosomal protein uS12. The polypeptide is Ribosomal protein uS12 methylthiotransferase RimO (Francisella tularensis subsp. novicida (strain U112)).